We begin with the raw amino-acid sequence, 485 residues long: Glutamate--tRNA ligase (485 aa).

A 'HIGH' region motif is present at residues 11 to 21 (PSPTGHLHIGG). The short motif at 252 to 256 (KMSKR) is the 'KMSKS' region element. An ATP-binding site is contributed by K255.

Belongs to the class-I aminoacyl-tRNA synthetase family. Glutamate--tRNA ligase type 1 subfamily. As to quaternary structure, monomer.

It localises to the cytoplasm. It catalyses the reaction tRNA(Glu) + L-glutamate + ATP = L-glutamyl-tRNA(Glu) + AMP + diphosphate. Functionally, catalyzes the attachment of glutamate to tRNA(Glu) in a two-step reaction: glutamate is first activated by ATP to form Glu-AMP and then transferred to the acceptor end of tRNA(Glu). The sequence is that of Glutamate--tRNA ligase from Halalkalibacterium halodurans (strain ATCC BAA-125 / DSM 18197 / FERM 7344 / JCM 9153 / C-125) (Bacillus halodurans).